A 220-amino-acid polypeptide reads, in one-letter code: Deoxyribose-phosphate aldolase (220 aa).

Aspartate 89 acts as the Proton donor/acceptor in catalysis. The active-site Schiff-base intermediate with acetaldehyde is lysine 151. Lysine 180 acts as the Proton donor/acceptor in catalysis.

Belongs to the DeoC/FbaB aldolase family. DeoC type 1 subfamily.

The protein resides in the cytoplasm. The catalysed reaction is 2-deoxy-D-ribose 5-phosphate = D-glyceraldehyde 3-phosphate + acetaldehyde. Its pathway is carbohydrate degradation; 2-deoxy-D-ribose 1-phosphate degradation; D-glyceraldehyde 3-phosphate and acetaldehyde from 2-deoxy-alpha-D-ribose 1-phosphate: step 2/2. Functionally, catalyzes a reversible aldol reaction between acetaldehyde and D-glyceraldehyde 3-phosphate to generate 2-deoxy-D-ribose 5-phosphate. The polypeptide is Deoxyribose-phosphate aldolase (Streptococcus suis (strain 05ZYH33)).